The primary structure comprises 73 residues: NAD(P)H-quinone oxidoreductase subunit L (73 aa).

A run of 2 helical transmembrane segments spans residues 7–27 (LIGLTYAALAVLYLLVLPFLF) and 44–64 (VLMFFLVLFFFPGMVLVAPFM).

It belongs to the complex I NdhL subunit family. NDH-1 can be composed of about 15 different subunits; different subcomplexes with different compositions have been identified which probably have different functions.

It localises to the cellular thylakoid membrane. It catalyses the reaction a plastoquinone + NADH + (n+1) H(+)(in) = a plastoquinol + NAD(+) + n H(+)(out). The enzyme catalyses a plastoquinone + NADPH + (n+1) H(+)(in) = a plastoquinol + NADP(+) + n H(+)(out). In terms of biological role, NDH-1 shuttles electrons from an unknown electron donor, via FMN and iron-sulfur (Fe-S) centers, to quinones in the respiratory and/or the photosynthetic chain. The immediate electron acceptor for the enzyme in this species is believed to be plastoquinone. Couples the redox reaction to proton translocation, and thus conserves the redox energy in a proton gradient. Cyanobacterial NDH-1 also plays a role in inorganic carbon-concentration. This is NAD(P)H-quinone oxidoreductase subunit L from Synechococcus sp. (strain JA-3-3Ab) (Cyanobacteria bacterium Yellowstone A-Prime).